The chain runs to 244 residues: 3-deoxy-manno-octulosonate cytidylyltransferase (244 aa).

This sequence belongs to the KdsB family.

It is found in the cytoplasm. It catalyses the reaction 3-deoxy-alpha-D-manno-oct-2-ulosonate + CTP = CMP-3-deoxy-beta-D-manno-octulosonate + diphosphate. It functions in the pathway nucleotide-sugar biosynthesis; CMP-3-deoxy-D-manno-octulosonate biosynthesis; CMP-3-deoxy-D-manno-octulosonate from 3-deoxy-D-manno-octulosonate and CTP: step 1/1. Its pathway is bacterial outer membrane biogenesis; lipopolysaccharide biosynthesis. In terms of biological role, activates KDO (a required 8-carbon sugar) for incorporation into bacterial lipopolysaccharide in Gram-negative bacteria. This is 3-deoxy-manno-octulosonate cytidylyltransferase from Anaeromyxobacter sp. (strain Fw109-5).